The primary structure comprises 160 residues: Nucleotide-binding protein CBU_0114 (160 aa).

Belongs to the YajQ family.

Functionally, nucleotide-binding protein. The sequence is that of Nucleotide-binding protein CBU_0114 from Coxiella burnetii (strain RSA 493 / Nine Mile phase I).